Reading from the N-terminus, the 470-residue chain is AAA-ATPase At5g17730 (470 aa).

Residues 1-18 form the signal peptide; it reads MFSLRNLPSLAPFVSAYA. 252 to 259 serves as a coordination point for ATP; the sequence is GPPGTGKT.

Belongs to the AAA ATPase family. BCS1 subfamily. Mg(2+) is required as a cofactor.

It carries out the reaction ATP + H2O = ADP + phosphate + H(+). The protein is AAA-ATPase At5g17730 of Arabidopsis thaliana (Mouse-ear cress).